A 341-amino-acid chain; its full sequence is UDP-N-acetylenolpyruvoylglucosamine reductase (341 aa).

One can recognise an FAD-binding PCMH-type domain in the interval 13 to 185 (FGVEQSCLSM…TAVGLRLPKA (173 aa)). Arg161 is an active-site residue. The active-site Proton donor is the Ser231. Residue Glu327 is part of the active site.

This sequence belongs to the MurB family. The cofactor is FAD.

It is found in the cytoplasm. It catalyses the reaction UDP-N-acetyl-alpha-D-muramate + NADP(+) = UDP-N-acetyl-3-O-(1-carboxyvinyl)-alpha-D-glucosamine + NADPH + H(+). Its pathway is cell wall biogenesis; peptidoglycan biosynthesis. In terms of biological role, cell wall formation. In Shewanella sp. (strain MR-4), this protein is UDP-N-acetylenolpyruvoylglucosamine reductase.